A 325-amino-acid chain; its full sequence is MTAPFVLAVPSKGRLQENAEAFFARAGLALSKPGGARDYRGTIAGLDNVEVAYLSASEIAANLARGSVHFGVTGEDLLRESIADADRRVLLIDGLGFGYANVVVAVPQAWIDVRTMADLDDVTTGFRAQHNRRMRVATKYINLTRGFFAQHNVVDYRIVESAGATEGAPAVGTAEMIVDITTTGATLAANGLKVLDDGIMLRSQANLVASRDADWSDEVRETARVILDQIASRARASKYKEVRTRFAGCNEALLAEAHKRFGVVSPFGGPTSSGMLTLHCPPAQIYGLGSFLREHGADTVSVASLDYVFDKDNPLFSKLAAFLRQ.

The protein belongs to the ATP phosphoribosyltransferase family. Long subfamily. Mg(2+) serves as cofactor.

The protein resides in the cytoplasm. It catalyses the reaction 1-(5-phospho-beta-D-ribosyl)-ATP + diphosphate = 5-phospho-alpha-D-ribose 1-diphosphate + ATP. Its pathway is amino-acid biosynthesis; L-histidine biosynthesis; L-histidine from 5-phospho-alpha-D-ribose 1-diphosphate: step 1/9. With respect to regulation, feedback inhibited by histidine. Catalyzes the condensation of ATP and 5-phosphoribose 1-diphosphate to form N'-(5'-phosphoribosyl)-ATP (PR-ATP). Has a crucial role in the pathway because the rate of histidine biosynthesis seems to be controlled primarily by regulation of HisG enzymatic activity. This is ATP phosphoribosyltransferase from Rhodopseudomonas palustris (strain HaA2).